The following is a 238-amino-acid chain: tRNA (guanine-N(7)-)-methyltransferase (238 aa).

Over residues 1–12 the composition is skewed to polar residues; the sequence is MTDTAENQTPND. Positions 1–20 are disordered; it reads MTDTAENQTPNDRQAGHPRS. Residues glutamate 70, aspartate 95, aspartate 122, and aspartate 145 each coordinate S-adenosyl-L-methionine. Aspartate 145 is an active-site residue. Substrate contacts are provided by residues lysine 149, aspartate 181, and 216 to 219; that span reads TKFE.

This sequence belongs to the class I-like SAM-binding methyltransferase superfamily. TrmB family.

It catalyses the reaction guanosine(46) in tRNA + S-adenosyl-L-methionine = N(7)-methylguanosine(46) in tRNA + S-adenosyl-L-homocysteine. Its pathway is tRNA modification; N(7)-methylguanine-tRNA biosynthesis. Functionally, catalyzes the formation of N(7)-methylguanine at position 46 (m7G46) in tRNA. The sequence is that of tRNA (guanine-N(7)-)-methyltransferase from Neisseria meningitidis serogroup C (strain 053442).